An 84-amino-acid chain; its full sequence is Cell division topological specificity factor (84 aa).

Belongs to the MinE family.

In terms of biological role, prevents the cell division inhibition by proteins MinC and MinD at internal division sites while permitting inhibition at polar sites. This ensures cell division at the proper site by restricting the formation of a division septum at the midpoint of the long axis of the cell. The protein is Cell division topological specificity factor of Cupriavidus pinatubonensis (strain JMP 134 / LMG 1197) (Cupriavidus necator (strain JMP 134)).